A 273-amino-acid chain; its full sequence is Putative methyltransferase Cher3 (273 aa).

In terms of domain architecture, CheR-type methyltransferase spans 1 to 273 (MTSERNTDIE…VKPQRIFRKS (273 aa)). S-adenosyl-L-methionine contacts are provided by residues Ser-76, Arg-80, Glu-114, Asp-137, 199 to 200 (SL), and 215 to 216 (RN).

This chain is Putative methyltransferase Cher3 (cheR3), found in Pseudomonas putida (strain ATCC 47054 / DSM 6125 / CFBP 8728 / NCIMB 11950 / KT2440).